A 338-amino-acid chain; its full sequence is Probable tRNA pseudouridine synthase B (338 aa).

Asp-80 functions as the Nucleophile in the catalytic mechanism. A PUA domain is found at 247-322; it reads LPRIEIRDTA…IMVDTKRVLM (76 aa).

Belongs to the pseudouridine synthase TruB family. Type 2 subfamily.

The enzyme catalyses uridine(55) in tRNA = pseudouridine(55) in tRNA. Functionally, could be responsible for synthesis of pseudouridine from uracil-55 in the psi GC loop of transfer RNAs. The polypeptide is Probable tRNA pseudouridine synthase B (Methanopyrus kandleri (strain AV19 / DSM 6324 / JCM 9639 / NBRC 100938)).